The sequence spans 167 residues: Ureidoglycolate lyase (167 aa).

The protein belongs to the ureidoglycolate lyase family. In terms of assembly, homodimer. Requires Ni(2+) as cofactor.

The enzyme catalyses (S)-ureidoglycolate = urea + glyoxylate. Its pathway is nitrogen metabolism; (S)-allantoin degradation. Its function is as follows. Catalyzes the catabolism of the allantoin degradation intermediate (S)-ureidoglycolate, generating urea and glyoxylate. Involved in the utilization of allantoin as nitrogen source. The chain is Ureidoglycolate lyase from Pseudomonas entomophila (strain L48).